The sequence spans 464 residues: MMARRDPKSWAKRLVRAQTLQKQRRARVGPRAPPPDEEDPRLKCKNCGAFGHTARSTRCPMKCWKAALVPATLGKKEGKENLKPWKPRAEANPGPLNKDKGEKEERPRQQDPQRKALLHMFSGKPPEKPLPNGKGSTESSDYLRVASGPMPVHTTSKRPRLDPVLADRSATEMSGRGSVLASLSPLRKTSLSSSSSLGPKERQTGAAADMPQPAVRHQGPEPLLEVKPTHSRPEGGCQEVPQAASKTHGLLQASRPQAQDKRPAVTPQPCPPAATHSLGLGSNLSFGPGAKKPAQAPIQACLNFPKKPRLGPFQIPESAIQGGELGAPENLQPPPAATELGPSTSPQMGRRTPAQVPSVDRQPPHSRPCLPTAQACTMSHHSAAGHDGAQPLRVLFRRLENGRWSSSLLAAPSFHSPEKPGAFLAQSPHVSEKSEAPCVRVPPSVLYEDLQVSSSSEDSDSDLE.

Disordered regions lie at residues 1 to 43 (MMAR…PRLK), 70 to 389 (PATL…HDGA), and 415 to 437 (HSPE…SEAP). Basic and acidic residues-rich tracts occupy residues 74 to 89 (GKKE…KPRA) and 97 to 114 (NKDK…DPQR). A compositionally biased stretch (low complexity) spans 182–197 (SLSPLRKTSLSSSSSL).

This sequence belongs to the FAM90 family.

This is Protein FAM90A22 from Homo sapiens (Human).